Here is a 152-residue protein sequence, read N- to C-terminus: Cell division protein SepF (152 aa).

The interval 21-56 (EYIETEQDHPEEHEQQKDKQPAYAQKPQGKQNVVSL) is disordered. Residues 26–40 (EQDHPEEHEQQKDKQ) show a composition bias toward basic and acidic residues.

The protein belongs to the SepF family. As to quaternary structure, homodimer. Interacts with FtsZ.

Its subcellular location is the cytoplasm. Its function is as follows. Cell division protein that is part of the divisome complex and is recruited early to the Z-ring. Probably stimulates Z-ring formation, perhaps through the cross-linking of FtsZ protofilaments. Its function overlaps with FtsA. The chain is Cell division protein SepF from Bacillus velezensis (strain DSM 23117 / BGSC 10A6 / LMG 26770 / FZB42) (Bacillus amyloliquefaciens subsp. plantarum).